We begin with the raw amino-acid sequence, 143 residues long: Transcriptional regulator MraZ (143 aa).

2 SpoVT-AbrB domains span residues 5-47 (EYRH…TQEE) and 76-119 (ATEC…SEDR).

It belongs to the MraZ family. In terms of assembly, forms oligomers.

It is found in the cytoplasm. The protein resides in the nucleoid. The sequence is that of Transcriptional regulator MraZ from Ligilactobacillus salivarius (strain UCC118) (Lactobacillus salivarius).